Here is a 407-residue protein sequence, read N- to C-terminus: Nuclear hormone receptor family member nhr-86 (407 aa).

The segment at residues 21 to 96 (KSTCSICRED…VGMNPAGVQQ (76 aa)) is a DNA-binding region (nuclear receptor). 2 consecutive NR C4-type zinc fingers follow at residues 24–44 (CSIC…CRAC) and 60–79 (CRGN…CRSC). One can recognise an NR LBD domain in the interval 130-405 (AQSALVEDLH…KDFYDLVNGK (276 aa)). Residues 394–405 (PPKDFYDLVNGK) form an AF-2 region.

This sequence belongs to the nuclear hormone receptor family. As to expression, expressed in intestinal epithelial cells, excretory gland cells and in several head neurons.

The protein localises to the nucleus. Its function is as follows. Nuclear receptor which acts as a transcription activator. Binds small molecule ligands, such as phenazine 1-carboxamide (PCN), a pathogen-derived metabolite, leading to modulation of innate immune responses against virulent pathogens. On exposure to exogenous PCN, P.aeruginosa and other xenobiotic immunostimulant such as R24, activates immune response genes, including irg-4, irg-5, mul-1, drd-50, cyp-35C1 and ugt-30, probably via direct interaction with their promoters, and independent of the p38 MAPK pmk-1 pathway. Exhibits higher affinity to R24 than PCN and thus induces stronger immune response. Binds its own promoter thereby autoregulating its expression in the head hypodermis and the pharynx. Possibly plays a role in lipid storage or catabolism. This is Nuclear hormone receptor family member nhr-86 (nhr-86) from Caenorhabditis elegans.